Here is a 147-residue protein sequence, read N- to C-terminus: Cyanate hydratase (147 aa).

Catalysis depends on residues Arg-88, Glu-91, and Ser-114.

It belongs to the cyanase family.

The enzyme catalyses cyanate + hydrogencarbonate + 3 H(+) = NH4(+) + 2 CO2. Its function is as follows. Catalyzes the reaction of cyanate with bicarbonate to produce ammonia and carbon dioxide. This Methylibium petroleiphilum (strain ATCC BAA-1232 / LMG 22953 / PM1) protein is Cyanate hydratase.